Here is a 61-residue protein sequence, read N- to C-terminus: MPFVTIQFLEGRSDDQKKALVSEVTDVVSKNLKAPKENIHVILEEMKKTDYGVGGVRKSDI.

The active-site Proton acceptor; via imino nitrogen is P2.

The protein belongs to the 4-oxalocrotonate tautomerase family.

This is Probable tautomerase lin2709 from Listeria innocua serovar 6a (strain ATCC BAA-680 / CLIP 11262).